A 406-amino-acid chain; its full sequence is Exodeoxyribonuclease 7 large subunit (406 aa).

This sequence belongs to the XseA family. As to quaternary structure, heterooligomer composed of large and small subunits.

The protein resides in the cytoplasm. It carries out the reaction Exonucleolytic cleavage in either 5'- to 3'- or 3'- to 5'-direction to yield nucleoside 5'-phosphates.. Bidirectionally degrades single-stranded DNA into large acid-insoluble oligonucleotides, which are then degraded further into small acid-soluble oligonucleotides. This Desulfitobacterium hafniense (strain Y51) protein is Exodeoxyribonuclease 7 large subunit.